The chain runs to 61 residues: MEKRKTIKVTLVKSLIGTRHSHRLVIKGMGLRRLNHTVSLCDHPSIRGMINKTAYLLKVEE.

The protein belongs to the universal ribosomal protein uL30 family. As to quaternary structure, part of the 50S ribosomal subunit.

This chain is Large ribosomal subunit protein uL30, found in Nitrosomonas europaea (strain ATCC 19718 / CIP 103999 / KCTC 2705 / NBRC 14298).